Here is a 694-residue protein sequence, read N- to C-terminus: Rabphilin-3A (694 aa).

The span at 1-12 shows a compositional bias: polar residues; sequence MTDTVFSNSSNR. The tract at residues 1 to 51 is disordered; that stretch reads MTDTVFSNSSNRWMYPSDRPLQSNDKEQLQAGWSVHPGGQPDRQRKQEELT. A RabBD domain is found at 44–160; sequence QRKQEELTDE…KRSGAWFFKG (117 aa). The segment at 92-148 adopts an FYVE-type zinc-finger fold; it reads GDGVNRCILCGEQLGMLGSACVVCEDCKKNVCTKCGVETNNRLHSVWLCKICIEQRE. 8 residues coordinate Zn(2+): cysteine 98, cysteine 101, cysteine 115, cysteine 118, cysteine 123, cysteine 126, cysteine 140, and cysteine 143. The interval 166 to 388 is disordered; it reads LPQPMPIKKT…EEEANSYDSD (223 aa). Residues 177–186 are compositionally biased toward low complexity; the sequence is PQQPVSEPAA. Over residues 202–211 the composition is skewed to basic and acidic residues; the sequence is ARGDSEDRRG. Arginine 226 carries the post-translational modification Omega-N-methylarginine. Residue serine 272 is modified to Phosphoserine. The span at 352–370 shows a compositional bias: low complexity; that stretch reads PSGPYSQASAAAPQPAAAR. Acidic residues predominate over residues 375–388; sequence PEEEEEEANSYDSD. The C2 1 domain maps to 392 to 514; it reads TLGALEFSLL…KPNQRKNFNI (123 aa). 14 residues coordinate Ca(2+): methionine 422, aspartate 423, aspartate 429, aspartate 484, glutamate 485, aspartate 486, glutamate 492, glutamate 539, aspartate 581, aspartate 587, aspartate 641, tyrosine 642, aspartate 643, and aspartate 649. The 134-residue stretch at 550 to 683 folds into the C2 2 domain; that stretch reads ERGKILVSLM…NKDKKIERWH (134 aa). A phosphoserine mark is found at serine 692 and serine 693.

In terms of assembly, interacts with RAB3B, RAB3C, RAB3D, RAB8A, RAB27A and RAB27B. Interacts with RAB3A; this interaction recruits RPH3A to synaptic vesicules. Interacts (via C2B domain) with SNAP25. Interacts with deubiquitinating enzyme CAND1; this interaction results in the deubiquitination of RPH3A. Interacts with GRIN2A and DLG4; this ternary complex regulates NMDA receptor composition at postsynaptic membranes. Interacts with SNCA. Ca(2+) serves as cofactor. Ubiquitinated. Deubiquitinated by CAND1 to prevent its degradation.

The protein resides in the cytoplasmic vesicle. Its subcellular location is the secretory vesicle. It localises to the synaptic vesicle membrane. The protein localises to the cell projection. It is found in the dendritic spine. The protein resides in the postsynaptic cell membrane. Its subcellular location is the membrane. Functionally, plays an essential role in docking and fusion steps of regulated exocytosis. At the presynaptic level, RPH3A is recruited by RAB3A to the synaptic vesicle membrane in a GTP-dependent manner where it modulates synaptic vesicle trafficking and calcium-triggered neurotransmitter release. In the post-synaptic compartment, forms a ternary complex with GRIN2A and DLG4 and regulates NMDA receptor stability. Also plays a role in the exocytosis of arginine vasopressin hormone. The sequence is that of Rabphilin-3A (RPH3A) from Homo sapiens (Human).